We begin with the raw amino-acid sequence, 106 residues long: Small ribosomal subunit protein uS10 (106 aa).

The protein belongs to the universal ribosomal protein uS10 family. As to quaternary structure, part of the 30S ribosomal subunit.

Involved in the binding of tRNA to the ribosomes. The protein is Small ribosomal subunit protein uS10 of Pyrobaculum aerophilum (strain ATCC 51768 / DSM 7523 / JCM 9630 / CIP 104966 / NBRC 100827 / IM2).